Reading from the N-terminus, the 430-residue chain is Adenylosuccinate synthetase (430 aa).

GTP is bound by residues 13–19 (GDEGKGK) and 41–43 (GHT). Catalysis depends on Asp-14, which acts as the Proton acceptor. The Mg(2+) site is built by Asp-14 and Gly-41. IMP-binding positions include 14–17 (DEGK), 39–42 (NAGH), Thr-130, Arg-144, Gln-225, Thr-240, and Arg-304. The active-site Proton donor is the His-42. 300 to 306 (ATTGRAR) contacts substrate. Residues Arg-306, 332 to 334 (KLD), and 414 to 416 (STG) each bind GTP.

Belongs to the adenylosuccinate synthetase family. As to quaternary structure, homodimer. Mg(2+) serves as cofactor.

Its subcellular location is the cytoplasm. The enzyme catalyses IMP + L-aspartate + GTP = N(6)-(1,2-dicarboxyethyl)-AMP + GDP + phosphate + 2 H(+). It functions in the pathway purine metabolism; AMP biosynthesis via de novo pathway; AMP from IMP: step 1/2. Functionally, plays an important role in the de novo pathway of purine nucleotide biosynthesis. Catalyzes the first committed step in the biosynthesis of AMP from IMP. The protein is Adenylosuccinate synthetase of Pseudomonas paraeruginosa (strain DSM 24068 / PA7) (Pseudomonas aeruginosa (strain PA7)).